A 595-amino-acid chain; its full sequence is MDLCFQNPVKCGDRLFSALNTSTYYKLGTSNLGFNGPVLENRKKKKKLPRMVTVKSVSSSVVASTVQGTKRDGGESLYDAIVIGSGIGGLVAATQLAVKEARVLVLEKYLIPGGSSGFYERDGYTFDVGSSVMFGFSDKGNLNLITQALKAVGRKMEVIPDPTTVHFHLPNNLSVRIHREYDDFIAELTSKFPHEKEGILGFYGDCWKIFNSLNSLELKSLEEPIYLFGQFFQKPLECLTLAYYLPQNAGAIARKYIKDPQLLSFIDAECFIVSTVNALQTPMINASMVLCDRHYGGINYPVGGVGGIAKSLAEGLVDQGSEIQYKANVKSIILDHGKAVGVRLADGREFFAKTIISNATRWDTFGKLLKGEKLPKEEENFQKVYVKAPSFLSIHMGVKAEVLPPDTDCHHFVLEDDWKNLEEPYGSIFLSIPTILDSSLAPDGRHILHIFTTSSIEDWEGLPPKEYEAKKEDVAARIIQRLEKKLFPGLSSSITFKEVGTPRTHRRFLARDKGTYGPMPRGTPKGLLGMPFNTTAIDGLYCVGDSCFPGQGVIAVAFSGVMCAHRVAADIGLEKKSRVLDVGLLGLLGWLRTLA.

The transit peptide at Met-1–Ser-56 directs the protein to the chloroplast. Val-57 is subject to N-acetylvaline.

It belongs to the carotenoid/retinoid oxidoreductase family. CrtISO subfamily. It depends on NAD(+) as a cofactor. Requires NADP(+) as cofactor. FAD serves as cofactor.

The protein resides in the plastid. It is found in the chloroplast membrane. It catalyses the reaction 7,7',9,9'-tetra-cis-lycopene = all-trans-lycopene. The protein operates within carotenoid biosynthesis; lycopene biosynthesis. Carotene cis-trans-isomerase that converts 7,9,9'-tri-cis-neurosporene to 9'-cis-neurosporene and 7,9,9',7'-tetra-cis-lycopene (also known as prolycopene) into all-trans-lycopene. Isomerization requires redox-active components, suggesting that isomerization is achieved by a reversible redox reaction acting at specific double bonds. Isomerizes adjacent cis-double bonds at C7 and C9 pairwise into the trans-configuration, but is incapable of isomerizing single cis-double bonds at C9 and C9'. Carotenoid biosynthesis is partly required to form the prolamellar bodies of etioplasts. This chain is Prolycopene isomerase, chloroplastic (CRTISO), found in Arabidopsis thaliana (Mouse-ear cress).